The primary structure comprises 548 residues: Lysine--tRNA ligase (548 aa).

The 'HIGH' region signature appears at 52–60; it reads PSGLPHIGT. Positions 300–304 match the 'KMSKS' region motif; it reads KISKS. Lysine 303 is a binding site for ATP.

It belongs to the class-I aminoacyl-tRNA synthetase family.

The protein localises to the cytoplasm. It carries out the reaction tRNA(Lys) + L-lysine + ATP = L-lysyl-tRNA(Lys) + AMP + diphosphate. This Mesorhizobium japonicum (strain LMG 29417 / CECT 9101 / MAFF 303099) (Mesorhizobium loti (strain MAFF 303099)) protein is Lysine--tRNA ligase.